A 254-amino-acid polypeptide reads, in one-letter code: 3-deoxy-manno-octulosonate cytidylyltransferase (254 aa).

It belongs to the KdsB family.

The protein resides in the cytoplasm. It carries out the reaction 3-deoxy-alpha-D-manno-oct-2-ulosonate + CTP = CMP-3-deoxy-beta-D-manno-octulosonate + diphosphate. It functions in the pathway nucleotide-sugar biosynthesis; CMP-3-deoxy-D-manno-octulosonate biosynthesis; CMP-3-deoxy-D-manno-octulosonate from 3-deoxy-D-manno-octulosonate and CTP: step 1/1. The protein operates within bacterial outer membrane biogenesis; lipopolysaccharide biosynthesis. In terms of biological role, activates KDO (a required 8-carbon sugar) for incorporation into bacterial lipopolysaccharide in Gram-negative bacteria. The protein is 3-deoxy-manno-octulosonate cytidylyltransferase of Bordetella parapertussis (strain 12822 / ATCC BAA-587 / NCTC 13253).